The chain runs to 391 residues: Elongation factor Tu 1 (391 aa).

Positions 10–201 (KPHVNIGTIG…EVDNYIPTPE (192 aa)) constitute a tr-type G domain. Residues 19–26 (GHVDHGKT) form a G1 region. A GTP-binding site is contributed by 19–26 (GHVDHGKT). T26 contacts Mg(2+). The interval 55 to 59 (GITIS) is G2. The segment at 76–79 (DCPG) is G3. Residues 76–80 (DCPGH) and 131–134 (NKVD) contribute to the GTP site. A G4 region spans residues 131–134 (NKVD). Residues 169–171 (SAL) are G5.

This sequence belongs to the TRAFAC class translation factor GTPase superfamily. Classic translation factor GTPase family. EF-Tu/EF-1A subfamily. As to quaternary structure, monomer.

It localises to the cytoplasm. It catalyses the reaction GTP + H2O = GDP + phosphate + H(+). Functionally, GTP hydrolase that promotes the GTP-dependent binding of aminoacyl-tRNA to the A-site of ribosomes during protein biosynthesis. The chain is Elongation factor Tu 1 from Bartonella quintana (strain Toulouse) (Rochalimaea quintana).